A 101-amino-acid polypeptide reads, in one-letter code: MAKTSMKAREVKRAQLVAKYAEKRAALKAIIVSPASSDEDRWDAVLKLQALPRDSSASRKRNRCNQTGRPHGFLRKFGLSRIKLREATMRGEVPGLRKASW.

It belongs to the universal ribosomal protein uS14 family. Part of the 30S ribosomal subunit. Contacts proteins S3 and S10.

Binds 16S rRNA, required for the assembly of 30S particles and may also be responsible for determining the conformation of the 16S rRNA at the A site. This chain is Small ribosomal subunit protein uS14, found in Shewanella putrefaciens (strain CN-32 / ATCC BAA-453).